A 270-amino-acid chain; its full sequence is Gap junction beta-3 protein (270 aa).

Residues 1-20 (MDWKKLQDLLSGVNQYSTAF) are Cytoplasmic-facing. Residues 21–40 (GRIWLSVVFVFRVLVYVVAA) traverse the membrane as a helical segment. Residues 41-75 (ERVWGDEQKDFDCNTRQPGCTNVCYDNFFPISNIR) lie on the Extracellular side of the membrane. The chain crosses the membrane as a helical span at residues 76 to 98 (LWALQLIFVTCPSMLVILHVAYR). Residues 99 to 126 (EERERKHRQKHGEHCAKLYSHPGKKHGG) are Cytoplasmic-facing. Residues 127-149 (LWWTYLFSLIFKLIIELVFLYVL) form a helical membrane-spanning segment. Over 150 to 188 (HTLWHGFTMPRLVQCASVVPCPNTVDCYIARPTEKKVFT) the chain is Extracellular. A helical membrane pass occupies residues 189-211 (YFMVGASAVCIILTICEICYLIF). Residues 212–270 (HRIMRGLSKDKSTKSISSPKSSSRASTCRCHHKLLESGDLEAVPADDKLQASAPSLTPI) are Cytoplasmic-facing.

This sequence belongs to the connexin family. Beta-type (group I) subfamily. As to quaternary structure, a connexon is composed of a hexamer of connexins. Interacts with CNST.

It is found in the cell membrane. It localises to the cell junction. The protein localises to the gap junction. Its function is as follows. One gap junction consists of a cluster of closely packed pairs of transmembrane channels, the connexons, through which materials of low MW diffuse from one cell to a neighboring cell. The chain is Gap junction beta-3 protein (Gjb3) from Rattus norvegicus (Rat).